A 256-amino-acid chain; its full sequence is Thiazole synthase (256 aa).

K96 serves as the catalytic Schiff-base intermediate with DXP. 1-deoxy-D-xylulose 5-phosphate is bound by residues G157, 184 to 185, and 206 to 207; these read AG and NT.

It belongs to the ThiG family. In terms of assembly, homotetramer. Forms heterodimers with either ThiH or ThiS.

Its subcellular location is the cytoplasm. The catalysed reaction is [ThiS sulfur-carrier protein]-C-terminal-Gly-aminoethanethioate + 2-iminoacetate + 1-deoxy-D-xylulose 5-phosphate = [ThiS sulfur-carrier protein]-C-terminal Gly-Gly + 2-[(2R,5Z)-2-carboxy-4-methylthiazol-5(2H)-ylidene]ethyl phosphate + 2 H2O + H(+). Its pathway is cofactor biosynthesis; thiamine diphosphate biosynthesis. Its function is as follows. Catalyzes the rearrangement of 1-deoxy-D-xylulose 5-phosphate (DXP) to produce the thiazole phosphate moiety of thiamine. Sulfur is provided by the thiocarboxylate moiety of the carrier protein ThiS. In vitro, sulfur can be provided by H(2)S. The sequence is that of Thiazole synthase from Brucella suis (strain ATCC 23445 / NCTC 10510).